The primary structure comprises 375 residues: Queuine tRNA-ribosyltransferase (375 aa).

The active-site Proton acceptor is Asp89. Substrate contacts are provided by residues 89–93, Asp143, Gln187, and Gly214; that span reads DSGGF. An RNA binding region spans residues 245–251; sequence GVGKPED. The active-site Nucleophile is Asp264. The RNA binding; important for wobble base 34 recognition stretch occupies residues 269–273; it reads TRNAR. Zn(2+)-binding residues include Cys302, Cys304, Cys307, and His333.

It belongs to the queuine tRNA-ribosyltransferase family. In terms of assembly, homodimer. Within each dimer, one monomer is responsible for RNA recognition and catalysis, while the other monomer binds to the replacement base PreQ1. Zn(2+) serves as cofactor.

The enzyme catalyses 7-aminomethyl-7-carbaguanine + guanosine(34) in tRNA = 7-aminomethyl-7-carbaguanosine(34) in tRNA + guanine. It functions in the pathway tRNA modification; tRNA-queuosine biosynthesis. Functionally, catalyzes the base-exchange of a guanine (G) residue with the queuine precursor 7-aminomethyl-7-deazaguanine (PreQ1) at position 34 (anticodon wobble position) in tRNAs with GU(N) anticodons (tRNA-Asp, -Asn, -His and -Tyr). Catalysis occurs through a double-displacement mechanism. The nucleophile active site attacks the C1' of nucleotide 34 to detach the guanine base from the RNA, forming a covalent enzyme-RNA intermediate. The proton acceptor active site deprotonates the incoming PreQ1, allowing a nucleophilic attack on the C1' of the ribose to form the product. After dissociation, two additional enzymatic reactions on the tRNA convert PreQ1 to queuine (Q), resulting in the hypermodified nucleoside queuosine (7-(((4,5-cis-dihydroxy-2-cyclopenten-1-yl)amino)methyl)-7-deazaguanosine). This chain is Queuine tRNA-ribosyltransferase, found in Salmonella typhi.